The sequence spans 196 residues: MILSFKKLYLTFARSSRIIITLVIIDQLTKWWFINNLRWKPGLTLKVTSFLNMVYTWNYGISFGLMRDYYQYSNIVFLITNTIIVCYLYYLMMSSKTIGGFAGYSFVIGGAIGNLIDRSFRGAVFDFIHFYYQDYSFPVFNLADCFITLGVIILVEDYYSAKKNIEEKAKENYDKAQIEAMAEKIRNAPQGDNDKI.

The next 2 membrane-spanning stretches (helical) occupy residues 75 to 95 (IVFL…MMSS) and 97 to 117 (TIGG…NLID). Residues aspartate 126 and aspartate 144 contribute to the active site. Residues 135-155 (YSFPVFNLADCFITLGVIILV) form a helical membrane-spanning segment.

It belongs to the peptidase A8 family.

It is found in the cell inner membrane. It catalyses the reaction Release of signal peptides from bacterial membrane prolipoproteins. Hydrolyzes -Xaa-Yaa-Zaa-|-(S,diacylglyceryl)Cys-, in which Xaa is hydrophobic (preferably Leu), and Yaa (Ala or Ser) and Zaa (Gly or Ala) have small, neutral side chains.. It participates in protein modification; lipoprotein biosynthesis (signal peptide cleavage). This protein specifically catalyzes the removal of signal peptides from prolipoproteins. The protein is Lipoprotein signal peptidase of Rickettsia bellii (strain OSU 85-389).